A 214-amino-acid polypeptide reads, in one-letter code: Osteoclast-stimulating factor 1 (214 aa).

The residue at position 2 (Ser-2) is an N-acetylserine. One can recognise an SH3 domain in the interval 12 to 71; the sequence is GQVKVFRALYTFEPRTPDELYFEEGDIIYITDMSDTNWWKGTSKGRTGLIPSNYVAEQAE. ANK repeat units lie at residues 72 to 101, 105 to 135, and 139 to 168; these read SIDN…GVNG, AGST…ELNQ, and LGDT…RTDL. Thr-200 is subject to Phosphothreonine. 2 positions are modified to phosphoserine: Ser-202 and Ser-213.

Interacts with SRC and SMN1. Interacts with FASLG.

It localises to the cytoplasm. Induces bone resorption, acting probably through a signaling cascade which results in the secretion of factor(s) enhancing osteoclast formation and activity. The chain is Osteoclast-stimulating factor 1 (OSTF1) from Sus scrofa (Pig).